The chain runs to 483 residues: Regulatory protein ViaA (483 aa).

It belongs to the ViaA family. In terms of assembly, homodimer. Interacts with RavA.

Its subcellular location is the cytoplasm. Its function is as follows. Component of the RavA-ViaA chaperone complex, which may act on the membrane to optimize the function of some of the respiratory chains. ViaA stimulates the ATPase activity of RavA. The sequence is that of Regulatory protein ViaA from Escherichia coli O9:H4 (strain HS).